The chain runs to 848 residues: Coiled-coil and C2 domain-containing protein 1B (848 aa).

Basic residues predominate over residues 1-10 (MPGPRPRKGP). Disordered regions lie at residues 1–21 (MPGP…ETAK) and 53–75 (ALTG…PLPM). Positions 165–193 (LQALLEERIRNYREAAASAKEAGEAAKAR) form a coiled coil. Disordered stretches follow at residues 217-276 (EDEI…DPDP), 326-353 (VDLS…ATQG), 433-460 (DFAE…QDSV), and 476-523 (ALVD…SPSV). The segment covering 438 to 448 (PVPPGFPPIPG) has biased composition (pro residues). A Phosphoserine modification is found at serine 455. Over residues 476–485 (ALVDDDEESD) the composition is skewed to acidic residues. 2 stretches are compositionally biased toward low complexity: residues 487–498 (PAQAPLAKKPAQ) and 509–522 (EPKA…LSPS). The residue at position 583 (serine 583) is a Phosphoserine. At threonine 586 the chain carries Phosphothreonine. The stretch at 600-626 (LRLSQKAEEVYAQLQKMLQEQQAKCLL) forms a coiled coil. In terms of domain architecture, C2 spans 666–805 (DPPSHHFELK…EKECEIREIM (140 aa)).

Belongs to the CC2D1 family. Interacts with CHMP4B.

It is found in the nucleus. In terms of biological role, transcription factor that binds specifically to the DRE (dual repressor element) and represses HTR1A gene transcription in neuronal cells. The protein is Coiled-coil and C2 domain-containing protein 1B (Cc2d1b) of Mus musculus (Mouse).